The chain runs to 309 residues: Formate-nitrite transporter (309 aa).

The Cytoplasmic portion of the chain corresponds to 1-19 (MPPNNSKYVLDPVSIKSVC). The segment at residues 20 to 35 (GGEESYIRCVEYGKKK) is an intramembrane region (helical). Residues 36–40 (AHYSN) lie on the Cytoplasmic side of the membrane. Residues 41–68 (LNLLAKAILAGMFVGLCAHASGIAGGLF) form a helical membrane-spanning segment. At 69-79 (YYHKLREIVGA) the chain is on the extracellular side. A helical membrane pass occupies residues 80 to 100 (SMSVFVYGFTFPIAFMCIICT). Over 101–122 (GSDLFTGNTLAVTMALYEKKVK) the chain is Cytoplasmic. A helical membrane pass occupies residues 123 to 150 (LLDYLRVMTISLFGNYVGAVSFAFFVSY). Over 151-163 (LSGAFTNVHAVEK) the chain is Extracellular. The segment at residues 164 to 179 (NHFFQFLNDIAEKKVH) is an intramembrane region (helical). Topologically, residues 180–181 (HT) are extracellular. A helical membrane pass occupies residues 182-206 (FVECVSLAVGCNIFVCLAVYFVLTL). The Cytoplasmic segment spans residues 207–209 (KDG). The helical transmembrane segment at 210–226 (AGYVFSVFFAVYAFAIA) threads the bilayer. At 227 to 249 (GYEHIIANIYTLNIALMVNTKIT) the chain is on the extracellular side. Residues 250-280 (VYQAYIKNLLPTLLGNYIAGAIVLGLPLYFI) form a helical membrane-spanning segment. Residues 281-309 (YKEHYYNFERSKRDNNDAQMKSLSIELRN) lie on the Cytoplasmic side of the membrane.

It belongs to the FNT transporter (TC 1.A.16) family. As to quaternary structure, homopentamer.

Its subcellular location is the cell membrane. The protein resides in the vacuole membrane. The catalysed reaction is (S)-lactate(in) + H(+)(in) = (S)-lactate(out) + H(+)(out). The enzyme catalyses formate(in) + H(+)(in) = formate(out) + H(+)(out). It catalyses the reaction pyruvate(out) + H(+)(out) = pyruvate(in) + H(+)(in). It carries out the reaction acetate(out) + H(+)(out) = acetate(in) + H(+)(in). Its activity is regulated as follows. Inhibited by diethylpyrocarbonate (DEPC). Protonophores, such as 2,4-dinitrophenol and carbonylcyanide-3-chlorophenylhydrazone, abolish transport. Inhibited by phloretin, furosemide, alpha-cyano-4-hydroxy-cinnamate and alpha-fluorocinnamate. Inhibited by the Malaria Box compound MMV007839 and its derivatives BH296 and BH267.meta. Inhibited by the Malaria Box compound MMV000972. Inhibited by broad-specificity anion transport inhibitor NPPB. Functionally, monocarboxylate-proton symporter that mediates the efflux of the waste product lactate in the intraerythrocytic parasites; active in acidic-to-neutral pH range. Transports L-lactate. Transports D-lactate, pyruvate, acetate and formate. Essential for asexual growth but dispensable for the development of gametocytes. In Plasmodium falciparum (isolate 3D7), this protein is Formate-nitrite transporter.